The sequence spans 401 residues: Forkhead box protein H1 (401 aa).

Residues 32-57 (MGPRDNSQLRPPEAESLSKTPKRRKK) form a disordered region. The fork-head DNA-binding region spans 64-163 (KPPYTYLAMI…QNTALCRRWQ (100 aa)). The tract at residues 179–251 (VLHGQPYQPP…PSSSSETPLW (73 aa)) is disordered. A compositionally biased stretch (pro residues) spans 185–195 (YQPPSPPPPPR). The span at 221 to 230 (GQSTAAQAGT) shows a compositional bias: polar residues. Residues 307–390 (LWGQLPTSYL…VSHPRDLAAP (84 aa)) form an SMAD-interaction domain (SID) region. The Fast/FoxH1 motif 1 (FM1) signature appears at 311 to 315 (LPTSY). The Fast/FoxH1 motif 2 (FM2) signature appears at 321–327 (PNVVMPL). Residues 363 to 384 (LDSLFQGVPPNKSIYDVWVSHP) carry the SMAD interaction motif (SIM) motif.

Interacts with the MH2 domains of SMAD2 and SMAD3.

It is found in the nucleus. Transcriptional activator. Recognizes and binds to the DNA sequence 5'-TGT[GT][GT]ATT-3'. Required for induction of the goosecoid (GSC) promoter by TGF-beta or activin signaling. Forms a transcriptionally active complex containing FOXH1/SMAD2/SMAD4 on a site on the GSC promoter called TARE (TGF-beta/activin response element). The chain is Forkhead box protein H1 (Foxh1) from Mus musculus (Mouse).